Consider the following 103-residue polypeptide: Integration host factor subunit alpha (103 aa).

The segment at 50–72 (GNFNLRDKGERPGRNPKTGEEIP) is disordered. Residues 54-69 (LRDKGERPGRNPKTGE) show a composition bias toward basic and acidic residues.

It belongs to the bacterial histone-like protein family. As to quaternary structure, heterodimer of an alpha and a beta chain.

Its function is as follows. This protein is one of the two subunits of integration host factor, a specific DNA-binding protein that functions in genetic recombination as well as in transcriptional and translational control. The polypeptide is Integration host factor subunit alpha (Coxiella burnetii (strain CbuK_Q154) (Coxiella burnetii (strain Q154))).